The chain runs to 382 residues: Porin-like protein BU359 (382 aa).

The first 23 residues, 1–23, serve as a signal peptide directing secretion; that stretch reads MTNRKSLAMVIPMLLAASNGVNA.

This sequence belongs to the Gram-negative porin family. Homotrimer.

Its subcellular location is the cell outer membrane. Forms pores that allow passive diffusion of small molecules across the membrane. This chain is Porin-like protein BU359, found in Buchnera aphidicola subsp. Acyrthosiphon pisum (strain APS) (Acyrthosiphon pisum symbiotic bacterium).